We begin with the raw amino-acid sequence, 266 residues long: Family of serine hydrolases 3 (266 aa).

Residues Ser117, Asp180, and His209 each act as charge relay system in the active site.

This sequence belongs to the AB hydrolase 3 family.

Functionally, serine hydrolase of unknown specificity. The sequence is that of Family of serine hydrolases 3 (FSH3) from Saccharomyces cerevisiae (strain ATCC 204508 / S288c) (Baker's yeast).